The following is an 83-amino-acid chain: Toxin AahP985 (83 aa).

Residues 1–18 (MNYLVMISLALLIAGVDS) form the signal peptide. The LCN-type CS-alpha/beta domain maps to 20 to 82 (RDAYIAKNDN…VPIKLSGECH (63 aa)). 4 cysteine pairs are disulfide-bonded: cysteine 30–cysteine 81, cysteine 34–cysteine 54, cysteine 40–cysteine 64, and cysteine 44–cysteine 66.

Belongs to the long (4 C-C) scorpion toxin superfamily. Sodium channel inhibitor family. Alpha subfamily. As to expression, expressed by the venom gland.

It localises to the secreted. Binds voltage-independently at site-3 of sodium channels (Nav) and inhibits the inactivation of the activated channels, thereby blocking neuronal transmission. The protein is Toxin AahP985 of Androctonus australis (Sahara scorpion).